The primary structure comprises 672 residues: Serine/threonine-protein kinase ppk16 (672 aa).

In terms of domain architecture, Protein kinase spans Tyr-31 to Phe-279. ATP is bound by residues Val-37–Val-45 and Lys-60. Asp-148 serves as the catalytic Proton acceptor. A Phosphoserine modification is found at Ser-231. Polar residues predominate over residues Val-375–Ser-384. 4 disordered regions span residues Val-375–Asn-396, Asp-416–Leu-436, Asn-464–Val-572, and Ser-632–Leu-672. The segment covering Asn-472–Pro-487 has biased composition (polar residues). The segment covering Ser-508–Asn-523 has biased composition (low complexity). Over residues Leu-531–Thr-541 the composition is skewed to polar residues. Composition is skewed to low complexity over residues Arg-549–Val-572 and Ser-639–Ser-649.

Belongs to the protein kinase superfamily. Ser/Thr protein kinase family.

The protein resides in the cytoplasm. It catalyses the reaction L-seryl-[protein] + ATP = O-phospho-L-seryl-[protein] + ADP + H(+). It carries out the reaction L-threonyl-[protein] + ATP = O-phospho-L-threonyl-[protein] + ADP + H(+). Functionally, has a role in meiosis. The sequence is that of Serine/threonine-protein kinase ppk16 (ppk16) from Schizosaccharomyces pombe (strain 972 / ATCC 24843) (Fission yeast).